Reading from the N-terminus, the 429-residue chain is Histidinol dehydrogenase (429 aa).

3 residues coordinate NAD(+): Tyr127, Gln188, and Asn211. Residues Ser234, Gln256, and His259 each contribute to the substrate site. Residues Gln256 and His259 each contribute to the Zn(2+) site. Catalysis depends on proton acceptor residues Glu324 and His325. 4 residues coordinate substrate: His325, Asp358, Glu412, and His417. Zn(2+) is bound at residue Asp358. His417 is a Zn(2+) binding site.

Belongs to the histidinol dehydrogenase family. Zn(2+) is required as a cofactor.

The enzyme catalyses L-histidinol + 2 NAD(+) + H2O = L-histidine + 2 NADH + 3 H(+). The protein operates within amino-acid biosynthesis; L-histidine biosynthesis; L-histidine from 5-phospho-alpha-D-ribose 1-diphosphate: step 9/9. Catalyzes the sequential NAD-dependent oxidations of L-histidinol to L-histidinaldehyde and then to L-histidine. This is Histidinol dehydrogenase from Bacillus cereus (strain ATCC 14579 / DSM 31 / CCUG 7414 / JCM 2152 / NBRC 15305 / NCIMB 9373 / NCTC 2599 / NRRL B-3711).